A 418-amino-acid polypeptide reads, in one-letter code: MHPRRPEGFDGLGYRGGVRDDPAFGGPFHARSFGSGTELGHWVTTPPDIPGSRNLHWGEKSPSYGVPSAPPTLEGPAEEPFPGGGDGPRPGRSSEQLNRFAGFGIGLASLFTENVLAHPCIVLRRQCQVNYHARHYHLTPFSVINIMYSFNKTQGPRALWKGMGSTFIVQGVTLGAEGIISEFTPLPREVSQKWNPKQIGEHLLLKCLTYMVAMPFYSASLIETVQSEIIRDNTGILECVKEGIGRVIGLGVPHSKRLLPLFSLIFPTVLHGVLHYIISSIIQKIVLLILKRKTCSSHLAESTSPMQNMLDAYFPELIANFAASLCSDVILYPLETVLHRLHIQGTRTIIDNTDLGYEVLPINTQYEGMRDCVNTIKQEEGVFGFYKGFGAVIIQYTLHATILQITKIIYSTLLQNSI.

Residues S32 and S35 each carry the phosphoserine modification. T45 carries the post-translational modification Phosphothreonine. The tract at residues 46–96 is disordered; sequence PPDIPGSRNLHWGEKSPSYGVPSAPPTLEGPAEEPFPGGGDGPRPGRSSEQ. A Solcar 1 repeat occupies 96 to 187; sequence QLNRFAGFGI…GIISEFTPLP (92 aa). The next 6 membrane-spanning stretches (helical) occupy residues 103–123, 167–187, 202–222, 258–278, 314–334, and 382–402; these read FGIGLASLFTENVLAHPCIVL, FIVQGVTLGAEGIISEFTPLP, HLLLKCLTYMVAMPFYSASLI, LLPLFSLIFPTVLHGVLHYII, FPELIANFAASLCSDVILYPL, and VFGFYKGFGAVIIQYTLHATI. The Solcar 2 repeat unit spans residues 311–416; sequence DAYFPELIAN…KIIYSTLLQN (106 aa).

Belongs to the mitochondrial carrier (TC 2.A.29) family. Associates with the mitochondrial contact site and cristae organizing system (MICOS) complex. May associate with the endoplasmic reticulum membrane protein complex (EMC). In terms of tissue distribution, widely expressed. Highly expressed in hindbrain, spinal cord and brain coronal sections containing corpus callosum, fornix, optic chiasm, thalamus, hypothalamus, midbrain, pons and cerebellum.

The protein resides in the mitochondrion outer membrane. Its function is as follows. Transmembrane protein of the mitochondrial outer membrane that controls mitochondrial organization. May regulate the assembly of the MICOS (mitochondrial contact site and cristae organizing system) complex which is essential to the biogenesis and dynamics of mitochondrial cristae, the inwards folds of the inner mitochondrial membrane. Through its interaction with the EMC (endoplasmic reticulum membrane protein complex), could regulate mitochondrial lipid homeostasis and thereby mitochondrial fission. This chain is Mitochondrial outer membrane protein SLC25A46, found in Rattus norvegicus (Rat).